The chain runs to 414 residues: Ena/VASP-like protein (414 aa).

The region spanning 1–112 is the WH1 domain; that stretch reads MSEQSICQAR…NAMLFALNIM (112 aa). Ser-130 is modified (phosphoserine). Positions 157-369 are disordered; that stretch reads ATGPILPPGH…SRVKPAGSVN (213 aa). Residues 179 to 204 are compositionally biased toward pro residues; sequence GPPPPPPPPVPPPPTGSTPPPPPPLP. Low complexity predominate over residues 217 to 228; sequence SASGLAAALAGA. The segment at 220–240 is EVH2 block A; the sequence is GLAAALAGAKLRRVQRPEDAS. The segment at 220–411 is EVH2; that stretch reads GLAAALAGAK…DAIRQELSGI (192 aa). Positions 229–232 match the KLKR motif; that stretch reads KLRR. Residues 240–251 show a composition bias toward low complexity; it reads SGGSSPSGTSKS. Residues Ser-244 and Ser-257 each carry the phosphoserine modification. The EVH2 block B stretch occupies residues 263 to 280; sequence GGLMEEMNKLLAKRRKAA. Positions 297–318 are enriched in polar residues; it reads EDPSTSPSPGTRATSQPPNSSE. Phosphoserine occurs at positions 302, 304, 327, 329, 339, 347, 352, and 367. Over residues 319-329 the composition is skewed to basic and acidic residues; sequence AGRKPWERSNS. Residues 340–360 form a required for interaction with ZDHHC17 region; the sequence is RTPSVAKSPEAKSPLQSQPHS. An EVH2 block C region spans residues 377–411; the sequence is DLDRMKQEILEEVVRELHKVKEEIIDAIRQELSGI.

This sequence belongs to the Ena/VASP family. In terms of assembly, homotetramer. Binds to the SH3 domains of ABL1, LYN and SRC. Also binds to profilin, with preference for isoform IIa of PFN2, and the WW domain of APBB1/FE65. Binds to SEMA6A. Interacts, via the Pro-rich region, with the C-terminal SH3 domain of DNMBP. Interacts with RAPH1. Binds, via the EVH1 domain, the Pro-rich domain of Listeria monocytogenes actA. Binds, via the EVH1 domain, the Pro-rich domain of ZYX. Interacts with FYB1. Interacts with ZDHHC17. Phosphorylated by PKA; phosphorylation abolishes binding to SH3 domains of ABL and SRC. Highest expression in thymus and spleen (at protein level). Low levels in placenta, ovary, testis, fat and lung (at protein level). Isoform 1 and isoform 2 are expressed in cortical neurons and glial cells.

The protein localises to the cytoplasm. The protein resides in the cytoskeleton. It localises to the stress fiber. Its subcellular location is the cell projection. It is found in the lamellipodium. In terms of biological role, ena/VASP proteins are actin-associated proteins involved in a range of processes dependent on cytoskeleton remodeling and cell polarity such as axon guidance and lamellipodial and filopodial dynamics in migrating cells. EVL enhances actin nucleation and polymerization. This chain is Ena/VASP-like protein (Evl), found in Mus musculus (Mouse).